The chain runs to 284 residues: MTKPDLASLEKTIEKAFDERDGINTATRGEVREAVEQSLILLDRGEVRVAEKQADGNWHVNQWLKKAVLLSFRLNPMEVIKGGPGQSSWWDKVPSKFDGWTANEFEKAGFRAVPNCIVRHSAYIAPNAILMPSFVNLGAYVDKGAMIDTWATVGSCAQIGKNVHLSGGVGIGGVLEPMQAGPTIIEDNCFIGARSEVVEGCIVREGSVLGMGVFIGKSTKIVDRATGEVFYGEVPPYSVVVAGTMPGKNVPGENWGPSLYCAVIVKRADEKTRSKTSINELLRD.

This sequence belongs to the transferase hexapeptide repeat family.

Its subcellular location is the cytoplasm. It carries out the reaction (S)-2,3,4,5-tetrahydrodipicolinate + succinyl-CoA + H2O = (S)-2-succinylamino-6-oxoheptanedioate + CoA. The protein operates within amino-acid biosynthesis; L-lysine biosynthesis via DAP pathway; LL-2,6-diaminopimelate from (S)-tetrahydrodipicolinate (succinylase route): step 1/3. This chain is 2,3,4,5-tetrahydropyridine-2,6-dicarboxylate N-succinyltransferase, found in Brucella abortus (strain S19).